The following is a 3916-amino-acid chain: Fusarin C synthetase (3916 aa).

The Ketosynthase family 3 (KS3) domain maps to 9-440 (KEPIAIIGTS…GTNVHAIIEQ (432 aa)). Active-site for beta-ketoacyl synthase activity residues include cysteine 182, histidine 319, and histidine 360. A malonyl-CoA:ACP transacylase (MAT) domain region spans residues 548–866 (VFTGQGAQWP…QGTVARNIHD (319 aa)). The segment at 935–1068 (HPLLGARSVE…GQLRVEFGCS (134 aa)) is N-terminal hotdog fold. Residues 935–1228 (HPLLGARSVE…GLTCTSLLRP (294 aa)) are dehydratase (DH) domain. The region spanning 935-1231 (HPLLGARSVE…CTSLLRPGPS (297 aa)) is the PKS/mFAS DH domain. Residue histidine 967 is the Proton acceptor; for dehydratase activity of the active site. Positions 1084–1231 (LTSVNMERFY…CTSLLRPGPS (148 aa)) are C-terminal hotdog fold. Catalysis depends on aspartate 1141, which acts as the Proton donor; for dehydratase activity. A C-methyltransferase (CMeT) domain region spans residues 1347 to 1575 (IQAVGENLPS…VNDFVDAEKY (229 aa)). The interval 2092-2266 (TYLLIGCTGG…AASVMHIGMV (175 aa)) is ketoreductase (KR) domain 1. One can recognise a Carrier 1 domain in the interval 2372–2449 (EILAVVEEEF…ELCSTVVSHL (78 aa)). The residue at position 2409 (serine 2409) is an O-(pantetheine 4'-phosphoryl)serine. The tract at residues 2487 to 2510 (NEPFTIRNSPNSTQVTSEAGVDED) is disordered. Polar residues predominate over residues 2492 to 2503 (IRNSPNSTQVTS). Positions 2522–2806 (PLSFAQERLW…VNLLPLRLKI (285 aa)) are condensation. The tract at residues 2975-3385 (EFVVKQPDDT…RIAGDSQIKL (411 aa)) is adenylation. A Carrier 2 domain is found at 3493–3570 (KPLTETQERL…EMAAKIDGST (78 aa)). Serine 3530 is modified (O-(pantetheine 4'-phosphoryl)serine). The interval 3612-3833 (LTGATGFLGV…DFVPVDVVAA (222 aa)) is thiolester reductase (R) domain.

This sequence in the C-terminal section; belongs to the NRP synthetase family.

It functions in the pathway mycotoxin biosynthesis. In terms of biological role, fusarin C synthetase; part of the gene cluster that mediates the biosynthesis of the mycotoxin fusarin C. Within the cluster, FUS1, FUS2, FUS8 and FUS9 are sufficient for fusarin production. The roles of the other FUS members are yet undetermined. The fusarin C synthetase FUS1 is responsible for the condensation of one acetyl-coenzyme A (CoA) unit with six malonyl-CoA units and the amide linkage of the arising heptaketide and homoserine, subsequently releasing the first intermediate, prefusarin, as an alcohol with an open ring structure. The cytochrome P450 monooxygenase FUS8 participates in multiple oxidation processes at carbon C-20 and is able to use the FUS1 product as substrate, resulting in formation of 20-hydroxy-prefusarin. This reaction seems to be essential before the 2-pyrrolidone ring closure can be catalyzed by FUS2, generating 20-hydroxy-fusarin. FUS8 is able to further oxidizes carbon C-20 after ring closure, resulting in the formation of carboxy-fusarin C. As the last step, FUS9 methylates the hydroxyl group at C-21 to generate fusarin C. Fusarin C can then rearrange to epi-fusarin C, the (z)-isomers, and fusarin A and fusarin D. The protein is Fusarin C synthetase of Gibberella fujikuroi (strain CBS 195.34 / IMI 58289 / NRRL A-6831) (Bakanae and foot rot disease fungus).